The chain runs to 523 residues: Probable 3-ketoacyl-CoA synthase 20 (523 aa).

2 consecutive transmembrane segments (helical) span residues 31 to 55 (IVAV…AAGG) and 78 to 96 (ALAV…YAAS). Positions 93-382 (YAASRPRPVY…RFLATVVLKR (290 aa)) constitute an FAE domain. Catalysis depends on residues C237, H317, H401, H405, and N438.

It belongs to the thiolase-like superfamily. Chalcone/stilbene synthases family. In terms of tissue distribution, highly expressed in leaf sheaths. Expressed in leaves, flag leaves and panicles.

The protein resides in the membrane. The catalysed reaction is a very-long-chain acyl-CoA + malonyl-CoA + H(+) = a very-long-chain 3-oxoacyl-CoA + CO2 + CoA. Contributes to fatty acids elongation. Plays a role in controlling leaf anatomy and plant architecture. This Oryza sativa subsp. japonica (Rice) protein is Probable 3-ketoacyl-CoA synthase 20.